Here is a 48-residue protein sequence, read N- to C-terminus: Small, acid-soluble spore protein G (48 aa).

Positions 1 to 16 (MSENRHENEENRRDAA) are enriched in basic and acidic residues. Residues 1-48 (MSENRHENEENRRDAAVAKVQNSGNAKVVVSVNTDQDQAQAQSQDGED) are disordered. A compositionally biased stretch (low complexity) spans 35–48 (DQDQAQAQSQDGED).

The polypeptide is Small, acid-soluble spore protein G (sspG) (Bacillus subtilis (strain 168)).